The sequence spans 244 residues: Large ribosomal subunit protein bL25 (244 aa).

Residues 197–244 (ADVEAEAAEAALAKEAATEAAEEEETEKPASEAEASGEAEQADTDKKE) are disordered. Residues 204 to 215 (AEAALAKEAATE) show a composition bias toward low complexity.

Belongs to the bacterial ribosomal protein bL25 family. CTC subfamily. Part of the 50S ribosomal subunit; part of the 5S rRNA/L5/L18/L25 subcomplex. Contacts the 5S rRNA. Binds to the 5S rRNA independently of L5 and L18.

In terms of biological role, this is one of the proteins that binds to the 5S RNA in the ribosome where it forms part of the central protuberance. The polypeptide is Large ribosomal subunit protein bL25 (Coxiella burnetii (strain CbuK_Q154) (Coxiella burnetii (strain Q154))).